The chain runs to 188 residues: Peptidyl-tRNA hydrolase (188 aa).

F15 lines the tRNA pocket. The active-site Proton acceptor is the H20. 3 residues coordinate tRNA: Y64, N66, and N112.

This sequence belongs to the PTH family. As to quaternary structure, monomer.

The protein resides in the cytoplasm. It carries out the reaction an N-acyl-L-alpha-aminoacyl-tRNA + H2O = an N-acyl-L-amino acid + a tRNA + H(+). In terms of biological role, hydrolyzes ribosome-free peptidyl-tRNAs (with 1 or more amino acids incorporated), which drop off the ribosome during protein synthesis, or as a result of ribosome stalling. Its function is as follows. Catalyzes the release of premature peptidyl moieties from peptidyl-tRNA molecules trapped in stalled 50S ribosomal subunits, and thus maintains levels of free tRNAs and 50S ribosomes. This chain is Peptidyl-tRNA hydrolase, found in Borreliella burgdorferi (strain ATCC 35210 / DSM 4680 / CIP 102532 / B31) (Borrelia burgdorferi).